The primary structure comprises 334 residues: Holliday junction branch migration complex subunit RuvB (334 aa).

The segment at 4–186 (ADRLIAPENP…FGITQRLEYY (183 aa)) is large ATPase domain (RuvB-L). ATP-binding positions include Ile-25, Arg-26, Gly-67, Lys-70, Thr-71, Thr-72, 133 to 135 (EDY), Arg-176, Tyr-186, and Arg-223. Thr-71 serves as a coordination point for Mg(2+). The small ATPAse domain (RuvB-S) stretch occupies residues 187 to 257 (KVQDLQNIVQ…VADKALNMLD (71 aa)). A head domain (RuvB-H) region spans residues 260–334 (AQGFDYMDRK…RAYLHFGIEK (75 aa)). Positions 315 and 320 each coordinate DNA.

It belongs to the RuvB family. Homohexamer. Forms an RuvA(8)-RuvB(12)-Holliday junction (HJ) complex. HJ DNA is sandwiched between 2 RuvA tetramers; dsDNA enters through RuvA and exits via RuvB. An RuvB hexamer assembles on each DNA strand where it exits the tetramer. Each RuvB hexamer is contacted by two RuvA subunits (via domain III) on 2 adjacent RuvB subunits; this complex drives branch migration. In the full resolvosome a probable DNA-RuvA(4)-RuvB(12)-RuvC(2) complex forms which resolves the HJ.

It is found in the cytoplasm. The enzyme catalyses ATP + H2O = ADP + phosphate + H(+). Functionally, the RuvA-RuvB-RuvC complex processes Holliday junction (HJ) DNA during genetic recombination and DNA repair, while the RuvA-RuvB complex plays an important role in the rescue of blocked DNA replication forks via replication fork reversal (RFR). RuvA specifically binds to HJ cruciform DNA, conferring on it an open structure. The RuvB hexamer acts as an ATP-dependent pump, pulling dsDNA into and through the RuvAB complex. RuvB forms 2 homohexamers on either side of HJ DNA bound by 1 or 2 RuvA tetramers; 4 subunits per hexamer contact DNA at a time. Coordinated motions by a converter formed by DNA-disengaged RuvB subunits stimulates ATP hydrolysis and nucleotide exchange. Immobilization of the converter enables RuvB to convert the ATP-contained energy into a lever motion, pulling 2 nucleotides of DNA out of the RuvA tetramer per ATP hydrolyzed, thus driving DNA branch migration. The RuvB motors rotate together with the DNA substrate, which together with the progressing nucleotide cycle form the mechanistic basis for DNA recombination by continuous HJ branch migration. Branch migration allows RuvC to scan DNA until it finds its consensus sequence, where it cleaves and resolves cruciform DNA. In Vibrio parahaemolyticus serotype O3:K6 (strain RIMD 2210633), this protein is Holliday junction branch migration complex subunit RuvB.